Consider the following 260-residue polypeptide: Flap endonuclease Xni (260 aa).

Position 105 (D105) interacts with Mg(2+). Residues 164–254 form the 5'-3' exonuclease domain; it reads SQFLDLLALA…LKDFRVNGPA (91 aa). Positions 172, 173, 181, 183, and 186 each coordinate K(+). The segment at 185 to 190 is interaction with DNA; the sequence is GIGPKS.

Belongs to the Xni family. Requires Mg(2+) as cofactor. K(+) serves as cofactor.

Its function is as follows. Has flap endonuclease activity. During DNA replication, flap endonucleases cleave the 5'-overhanging flap structure that is generated by displacement synthesis when DNA polymerase encounters the 5'-end of a downstream Okazaki fragment. This chain is Flap endonuclease Xni, found in Shewanella sp. (strain ANA-3).